The primary structure comprises 315 residues: Adenine deaminase (315 aa).

Residues His-14, His-16, and His-194 each contribute to the Zn(2+) site. Residue Glu-197 is the Proton donor of the active site. Zn(2+) is bound at residue Asp-275. Residue Asp-276 participates in substrate binding.

This sequence belongs to the metallo-dependent hydrolases superfamily. Adenosine and AMP deaminases family. Adenine deaminase type 2 subfamily. The cofactor is Zn(2+).

It catalyses the reaction adenine + H2O + H(+) = hypoxanthine + NH4(+). Catalyzes the hydrolytic deamination of adenine to hypoxanthine. Plays an important role in the purine salvage pathway and in nitrogen catabolism. The chain is Adenine deaminase from Pseudomonas putida (strain GB-1).